Reading from the N-terminus, the 135-residue chain is Large ribosomal subunit protein eL32 (135 aa).

It belongs to the eukaryotic ribosomal protein eL32 family.

The protein is Large ribosomal subunit protein eL32 of Methanococcus maripaludis (strain C6 / ATCC BAA-1332).